The following is a 742-amino-acid chain: MRPGLPSYLIVLAVCLLSHLLSSRYGAEAISEPLDKAFHLLLNTYGRPIRFLRENTTQCTYNSSLRNSTVVRENAISFNFFQSYNQYYVFHMPRCLFAGPLAEQFLNQVDLTETLERYQQRLNTYALVSKDLASYRSFSQQLKAQDSLGEQPTTVPPPIDLSIPHVWMPPQTTPHGWTESHTTSGLHRPHFNQTCILFDGHDLLFSTVTPCLHQGFYLIDELRYVKITLTEDFFVVTVSIDDDTPMLLIFGHLPRVLFKAPYQRDNFILRQTEKHELLVLVKKDQLNRHSYLKDPDFLDAALDFNYLDLSALLRNSFHRYAVDVLKSGRCQMLDRRTVEMAFAYALALFAAARQEEAGAQVSVPRALDRQAALLQIQEFMITCLSQTPPRTTLLLYPTAVDLAKRALWTPNQITDITSLVRLVYILSKQNQQHLIPQWALRQIADFALKLHKTHLASFLSAFARQELYLMGSLVHSMLVHTTERREIFIVETGLCSLAELSHFTQLLAHPHHEYLSDLYTPCSSSGRRDHSLERLTRLFPDATVPTTVPAALSILSTMQPSTLETFPDLFCLPLGESFSALTVSEHVSYVVTNQYLIKGISYPVSTTVVGQSLIITQTDSQTKCELTRNMHTTHSITAALNISLENCAFCQSALLEYDDTQGVINIMYMHDSDDVLFALDPYNEVVVSSPRTHYLMLLKNGTVLEVTDVVVDATDSRLLMMSVYALSAIIGIYLLYRMLKTC.

The first 29 residues, 1–29, serve as a signal peptide directing secretion; that stretch reads MRPGLPSYLIVLAVCLLSHLLSSRYGAEA. Over 30 to 719 the chain is Virion surface; it reads ISEPLDKAFH…VVDATDSRLL (690 aa). 4 N-linked (GlcNAc...) asparagine; by host glycosylation sites follow: asparagine 55, asparagine 62, asparagine 67, and asparagine 192. An interaction with gL region spans residues 217-280; the sequence is YLIDELRYVK…QTEKHELLVL (64 aa). N-linked (GlcNAc...) asparagine; by host glycans are attached at residues asparagine 641 and asparagine 700. A helical membrane pass occupies residues 720–740; the sequence is MMSVYALSAIIGIYLLYRMLK. Residues 741-742 are Intravirion-facing; that stretch reads TC.

Belongs to the herpesviridae glycoprotein H family. Interacts with glycoprotein L (gL); this interaction is necessary for the correct processing and cell surface expression of gH. The heterodimer gH/gL seems to interact with gB trimers during fusion. Forms the envelope pentamer complex (PC) composed of gH, gL, UL128, UL130, and UL131A. The pentamer interacts with host NRP2. Forms the envelope trimer complex composed of gH, gL, and gO. The trimer interacts with host PDGFRA. The trimer also interacts with host EPHA2. N-glycosylated, O-glycosylated, and sialylated.

Its subcellular location is the virion membrane. The protein localises to the host cell membrane. It is found in the host endosome membrane. The heterodimer glycoprotein H-glycoprotein L is required for the fusion of viral and plasma membranes leading to virus entry into the host cell. Following initial binding to host receptor, membrane fusion is mediated by the fusion machinery composed of gB and the heterodimer gH/gL. May also be involved in the fusion between the virion envelope and the outer nuclear membrane during virion morphogenesis. In human cytomegalovirus, forms two distincts complexes to mediate viral entry, a trimer and a pentamer at the surface of the virion envelope. The gH-gL-gO trimer is required for infection in fibroblasts by interacting with host PDGFRA, and in glioblastoma cells by interacting with host EPHA2. The gH-gL-UL128-UL130-UL131A pentamer is essential for viral entry in epithelial, endothelial and myeloid cells via interaction with host NRP2. The chain is Envelope glycoprotein H from Human cytomegalovirus (strain Towne) (HHV-5).